A 1723-amino-acid chain; its full sequence is Lymphocyte antigen 75 (1723 aa).

An N-terminal signal peptide occupies residues 1–27; that stretch reads MRTGRVTPGLAAGLLLLLLRSFGLVEP. The Extracellular segment spans residues 28-1667; sequence SESSGNDPFT…AVCKIPLSPD (1640 aa). Residues 33–182 enclose the Ricin B-type lectin domain; the sequence is NDPFTIVHEN…FLIGETWYHD (150 aa). The N-linked (GlcNAc...) asparagine glycan is linked to asparagine 135. Positions 164-211 constitute a Fibronectin type-II domain; the sequence is SYGRPCEFPFLIGETWYHDCIHDEDHSGPWCATTLSYEYDQKWGICLL. Disulfide bonds link cysteine 169/cysteine 194, cysteine 183/cysteine 209, cysteine 247/cysteine 340, and cysteine 317/cysteine 332. In terms of domain architecture, C-type lectin 1 spans 225–341; it reads QIGSCYQFNN…CESQQPYVCK (117 aa). Residues asparagine 345 and asparagine 377 are each glycosylated (N-linked (GlcNAc...) asparagine). 3 consecutive C-type lectin domains span residues 368–486, 493–625, and 652–791; these read NNGF…YVCK, KDAE…ICKK, and SSLS…WVCQ. 2 cysteine pairs are disulfide-bonded: cysteine 389–cysteine 485 and cysteine 462–cysteine 477. The N-linked (GlcNAc...) asparagine glycan is linked to asparagine 529. Disulfide bonds link cysteine 597–cysteine 614, cysteine 678–cysteine 790, and cysteine 752–cysteine 782. Residues asparagine 843 and asparagine 865 are each glycosylated (N-linked (GlcNAc...) asparagine). Tyrosine 934 is subject to Phosphotyrosine. 3 N-linked (GlcNAc...) asparagine glycosylation sites follow: asparagine 935, asparagine 1077, and asparagine 1104. In terms of domain architecture, C-type lectin 5 spans 959–1092; that stretch reads FQNKCFLKVN…ERHSLSLCQK (134 aa). Cysteines 1061 and 1081 form a disulfide. In terms of domain architecture, C-type lectin 6 spans 1111 to 1223; that stretch reads YLNNLYKIIS…DNQPGAICYY (113 aa). Cysteines 1198 and 1212 form a disulfide. Residues asparagine 1226, asparagine 1321, and asparagine 1393 are each glycosylated (N-linked (GlcNAc...) asparagine). The C-type lectin 7 domain maps to 1252–1375; the sequence is FQNSCYNFMI…VIEETLHFYQ (124 aa). 2 C-type lectin domains span residues 1402–1514 and 1543–1662; these read YKDG…ICYK and YGGH…VCKI. Cysteine 1489 and cysteine 1503 form a disulfide bridge. Asparagine 1594 and asparagine 1627 each carry an N-linked (GlcNAc...) asparagine glycan. Cysteine 1636 and cysteine 1651 are disulfide-bonded. The chain crosses the membrane as a helical span at residues 1668–1692; the sequence is YTGIAILFAVLCLLGLISLAIWFLL. Residues 1693–1723 are Cytoplasmic-facing; the sequence is QRSHIRWTGFSSVRYEHGTNEDEVMLPSFHD. Phosphoserine occurs at positions 1704 and 1720.

In terms of processing, N-glycosylated. In terms of tissue distribution, expressed in dendritic and thymic epithelial cells and lymph nodes.

It localises to the membrane. Acts as an endocytic receptor to direct captured antigens from the extracellular space to a specialized antigen-processing compartment. Causes reduced proliferation of B lymphocytes. The sequence is that of Lymphocyte antigen 75 (Ly75) from Mus musculus (Mouse).